The sequence spans 214 residues: Cell division protein SepF (214 aa).

The segment at 23 to 70 is disordered; the sequence is YYDDRAPSRGFPRPRFDDGYGRYDGDDYDDPRREPADCPPPAGYRGGY. Over residues 36–58 the composition is skewed to basic and acidic residues; it reads PRFDDGYGRYDGDDYDDPRREPA.

This sequence belongs to the SepF family. As to quaternary structure, homodimer. Interacts with FtsZ.

It localises to the cytoplasm. Functionally, cell division protein that is part of the divisome complex and is recruited early to the Z-ring. Probably stimulates Z-ring formation, perhaps through the cross-linking of FtsZ protofilaments. Its function overlaps with FtsA. This chain is Cell division protein SepF, found in Mycolicibacterium paratuberculosis (strain ATCC BAA-968 / K-10) (Mycobacterium paratuberculosis).